Here is a 354-residue protein sequence, read N- to C-terminus: Thiamine thiazole synthase (354 aa).

Substrate-binding positions include Ala83, Glu104–Ala105, Gly112, and Val177. The residue at position 210 (Cys210) is a 2,3-didehydroalanine (Cys). Substrate-binding positions include Asp212, His227, Met305, and Arg315–Arg317.

This sequence belongs to the THI4 family. As to quaternary structure, homooctamer. Requires Fe cation as cofactor. Post-translationally, during the catalytic reaction, a sulfide is transferred from Cys-210 to a reaction intermediate, generating a dehydroalanine residue.

The protein localises to the cytoplasm. It localises to the nucleus. It catalyses the reaction [ADP-thiazole synthase]-L-cysteine + glycine + NAD(+) = [ADP-thiazole synthase]-dehydroalanine + ADP-5-ethyl-4-methylthiazole-2-carboxylate + nicotinamide + 3 H2O + 2 H(+). Involved in biosynthesis of the thiamine precursor thiazole. Catalyzes the conversion of NAD and glycine to adenosine diphosphate 5-(2-hydroxyethyl)-4-methylthiazole-2-carboxylic acid (ADT), an adenylated thiazole intermediate. The reaction includes an iron-dependent sulfide transfer from a conserved cysteine residue of the protein to a thiazole intermediate. The enzyme can only undergo a single turnover, which suggests it is a suicide enzyme. May have additional roles in adaptation to various stress conditions and in DNA damage tolerance. The sequence is that of Thiamine thiazole synthase from Candida albicans (strain WO-1) (Yeast).